Consider the following 495-residue polypeptide: Glycerol kinase (495 aa).

ADP is bound at residue Thr-11. Residues Thr-11, Thr-12, and Ser-13 each contribute to the ATP site. Thr-11 serves as a coordination point for sn-glycerol 3-phosphate. Residue Arg-15 participates in ADP binding. Arg-81, Glu-82, Tyr-133, and Asp-242 together coordinate sn-glycerol 3-phosphate. Arg-81, Glu-82, Tyr-133, Asp-242, and Gln-243 together coordinate glycerol. ADP is bound by residues Thr-264 and Gly-307. ATP-binding residues include Thr-264, Gly-307, Gln-311, and Gly-408. ADP is bound by residues Gly-408 and Asn-412.

This sequence belongs to the FGGY kinase family.

The catalysed reaction is glycerol + ATP = sn-glycerol 3-phosphate + ADP + H(+). It functions in the pathway polyol metabolism; glycerol degradation via glycerol kinase pathway; sn-glycerol 3-phosphate from glycerol: step 1/1. Its activity is regulated as follows. Inhibited by fructose 1,6-bisphosphate (FBP). Functionally, key enzyme in the regulation of glycerol uptake and metabolism. Catalyzes the phosphorylation of glycerol to yield sn-glycerol 3-phosphate. The protein is Glycerol kinase of Rhodospirillum rubrum (strain ATCC 11170 / ATH 1.1.1 / DSM 467 / LMG 4362 / NCIMB 8255 / S1).